The primary structure comprises 100 residues: Urease subunit gamma (100 aa).

Belongs to the urease gamma subunit family. Heterotrimer of UreA (gamma), UreB (beta) and UreC (alpha) subunits. Three heterotrimers associate to form the active enzyme.

Its subcellular location is the cytoplasm. It carries out the reaction urea + 2 H2O + H(+) = hydrogencarbonate + 2 NH4(+). It functions in the pathway nitrogen metabolism; urea degradation; CO(2) and NH(3) from urea (urease route): step 1/1. This is Urease subunit gamma from Haemophilus influenzae (strain PittGG).